A 169-amino-acid chain; its full sequence is MITIYTSKGIKHKVQSVIKTHGTNNVYEICDIQKIYILKNDLGQANGLLQHDKATDQYLIHINENLQHQQFVIAHELGHYFLHKRLNTFKVVNCSKVLKDKLEHQASLFASELILTDKMLNEALPYIQGFSKEQIAAYFNVPSFVTDYKLSQIGSFSNRIYSHEISAFG.

His75 lines the Zn(2+) pocket. The active site involves Glu76. His79 serves as a coordination point for Zn(2+).

As to quaternary structure, interacts with ImmR.

Functionally, involved in the regulation of horizontal gene transfer through the integrative and conjugative element ICEBs1. Required for degradation of the ICEBs1 repressor protein ImmR/YdcN. The polypeptide is Metallopeptidase ImmA (immA) (Bacillus subtilis (strain 168)).